A 280-amino-acid polypeptide reads, in one-letter code: Dexamethasone-induced Ras-related protein 1 (280 aa).

Position 11 is an S-nitrosocysteine (Cys11). Residue 31–38 (GSSKVGKT) coordinates GTP. Positions 53 to 61 (YTPTIEDFH) match the Effector region motif. Residues 78 to 82 (DTSGN) and 145 to 148 (NKGD) each bind GTP. Cysteine methyl ester is present on Cys277. Cys277 carries S-farnesyl cysteine lipidation. Residues 278-280 (VIS) constitute a propeptide, removed in mature form.

Belongs to the small GTPase superfamily. RasD family. In terms of assembly, forms a ternary complex with CAPON and NOS1. Component of a complex, at least composed of APBB1, RASD1/DEXRAS1 and APP. Interacts with APBB1/FE65. Forms. S-nitrosylation stimulates guanine-nucleotide exchange activity. In terms of tissue distribution, prominently found in brain at both mRNA and protein levels. Moderate expression in testis and lung. Slightly expressed in heart, spleen, skeletal muscle, liver and kidney.

It localises to the cell membrane. The protein resides in the cytoplasm. It is found in the perinuclear region. The protein localises to the nucleus. Its function is as follows. Small GTPase. Negatively regulates the transcription regulation activity of the APBB1/FE65-APP complex via its interaction with APBB1/FE65. This chain is Dexamethasone-induced Ras-related protein 1 (Rasd1), found in Rattus norvegicus (Rat).